The sequence spans 300 residues: MKIAILSRDGTLYSCRRLREAAQQRGHQVEILDPLSCYMNVSPVASSIHYKGRQLPHFDAVIPRIGSAITYYGTAALRQFELLGSYPLNESVAITRARDKLRSLQLLARQGIDLPLTGIAHSPDDTSDLIAMVGGAPLVVKLVEGTQGIGVVLAETRQAAESVIDAFRGLNAHILVQEYIAEAKGCDIRCLVVGNEVVAAIERRAKEGDFRSNLHRGGMATVAQISDEERAIAIKATQTLGLDVAGVDILRATRGPLVMEVNASPGLEGVETTTGVDIASRMIAWIERQATPEFCLKIGG.

Residues 104–287 (LQLLARQGID…IASRMIAWIE (184 aa)) enclose the ATP-grasp domain. ATP is bound by residues K141, 178–179 (EY), D187, and 211–213 (RSN). Mg(2+)-binding residues include D248, E260, and N262. The Mn(2+) site is built by D248, E260, and N262.

The protein belongs to the RimK family. The cofactor is Mg(2+). Requires Mn(2+) as cofactor.

In Klebsiella pneumoniae (strain 342), this protein is Probable alpha-L-glutamate ligase.